A 390-amino-acid chain; its full sequence is Cold-responsive protein kinase 1 (390 aa).

In terms of domain architecture, Protein kinase spans 41–320 (FSAENKIGEG…VRLLTGEKDI (280 aa)). Residues 47-55 (IGEGGFGSV) and lysine 69 each bind ATP. Tyrosine 114 bears the Phosphotyrosine mark. The active-site Proton acceptor is the aspartate 169. Phosphoserine is present on residues serine 173 and serine 202. Phosphothreonine occurs at positions 203 and 208. A Phosphotyrosine modification is found at tyrosine 216. Residues 345 to 390 (TKTEQVNRQNYTNPSSSSNGSSRDHSNAYSSGASSANAGNTFSSTI) are disordered. The span at 354-390 (NYTNPSSSSNGSSRDHSNAYSSGASSANAGNTFSSTI) shows a compositional bias: low complexity.

Belongs to the protein kinase superfamily. Ser/Thr protein kinase family. As to quaternary structure, interacts with and phosphorylates 14-3-3 proteins. Binds to GRF6 at the plasma membrane. In terms of processing, autophosphorylated.

The protein localises to the cell membrane. It carries out the reaction L-seryl-[protein] + ATP = O-phospho-L-seryl-[protein] + ADP + H(+). The catalysed reaction is L-threonyl-[protein] + ATP = O-phospho-L-threonyl-[protein] + ADP + H(+). Activated by cold. In terms of biological role, negative regulator of freezing tolerance that phosphorylates 14-3-3 proteins (e.g. GRF6) thus triggering their translocation from the cytosol to the nucleus in response to cold stress. The polypeptide is Cold-responsive protein kinase 1 (Arabidopsis thaliana (Mouse-ear cress)).